Reading from the N-terminus, the 490-residue chain is Bifunctional protein HldE (490 aa).

The tract at residues 1-330 (MERKNVESLF…GSLGFQHGEG (330 aa)) is ribokinase. Position 205–208 (205–208 (NRKE)) interacts with ATP. Asp-275 is a catalytic residue. The interval 356–490 (FTNGCFDLLH…EKILKAYGEE (135 aa)) is cytidylyltransferase.

In the N-terminal section; belongs to the carbohydrate kinase PfkB family. The protein in the C-terminal section; belongs to the cytidylyltransferase family. In terms of assembly, homodimer.

The catalysed reaction is D-glycero-beta-D-manno-heptose 7-phosphate + ATP = D-glycero-beta-D-manno-heptose 1,7-bisphosphate + ADP + H(+). The enzyme catalyses D-glycero-beta-D-manno-heptose 1-phosphate + ATP + H(+) = ADP-D-glycero-beta-D-manno-heptose + diphosphate. Its pathway is nucleotide-sugar biosynthesis; ADP-L-glycero-beta-D-manno-heptose biosynthesis; ADP-L-glycero-beta-D-manno-heptose from D-glycero-beta-D-manno-heptose 7-phosphate: step 1/4. It functions in the pathway nucleotide-sugar biosynthesis; ADP-L-glycero-beta-D-manno-heptose biosynthesis; ADP-L-glycero-beta-D-manno-heptose from D-glycero-beta-D-manno-heptose 7-phosphate: step 3/4. Catalyzes the phosphorylation of D-glycero-D-manno-heptose 7-phosphate at the C-1 position to selectively form D-glycero-beta-D-manno-heptose-1,7-bisphosphate. Functionally, catalyzes the ADP transfer from ATP to D-glycero-beta-D-manno-heptose 1-phosphate, yielding ADP-D-glycero-beta-D-manno-heptose. This is Bifunctional protein HldE from Geobacter sulfurreducens (strain ATCC 51573 / DSM 12127 / PCA).